The sequence spans 1284 residues: Putative late blight resistance protein homolog R1B-16 (1284 aa).

Residues 533–555 (PRMNEEIVGFKDVIENLRNQLLN) are a coiled coil. Residues 534-821 (RMNEEIVGFK…SESFIKSSEG (288 aa)) form the NB-ARC domain. 567-574 (GMPGLGKT) contributes to the ATP binding site. LRR repeat units lie at residues 942-966 (FKFL…LFYL), 985-1010 (LWNL…VWDM), 1013-1036 (LRHL…SAKL), 1085-1107 (PIRL…FCIS), 1108-1135 (APNL…HLKN), 1159-1181 (FPQL…ADDA), 1182-1206 (FPNL…FMDI), and 1219-1243 (ESVV…NFKL). The 68-residue stretch at 1217–1284 (CNESVVKSAM…VEKQRKRGML (68 aa)) folds into the HMA domain.

This sequence belongs to the disease resistance NB-LRR family.

Its subcellular location is the cytoplasm. The protein localises to the membrane. Its function is as follows. Confers resistance to late blight (Phytophthora infestans) races carrying the avirulence gene Avr1. Resistance proteins guard the plant against pathogens that contain an appropriate avirulence protein via an indirect interaction with this avirulence protein. That triggers a defense system including the hypersensitive response, which restricts the pathogen growth. This chain is Putative late blight resistance protein homolog R1B-16 (R1B-16), found in Solanum demissum (Wild potato).